The following is a 347-amino-acid chain: uncharacterized protein (347 aa).

2 coiled-coil regions span residues 148-201 (DQQS…EKDG) and 261-298 (LENL…DTFS). The interval 151-203 (SISNLRKEEKEKQKENENENENENENENENEKENQELDKKVNQTNDNEKDGDE) is disordered. Positions 155–167 (LRKEEKEKQKENE) are enriched in basic and acidic residues. The span at 168–178 (NENENENENEN) shows a compositional bias: acidic residues. A compositionally biased stretch (basic and acidic residues) spans 179–191 (ENEKENQELDKKV).

This is an uncharacterized protein from Dictyostelium discoideum (Social amoeba).